Reading from the N-terminus, the 466-residue chain is RUS family member 1 (466 aa).

Position 2 is an N-acetylalanine (Ala2). The chain crosses the membrane as a helical span at residues 245–265 (LLMLPLVSDCPSLSLGCFVLL).

Belongs to the RUS1 family.

It localises to the membrane. This is RUS family member 1 from Mus musculus (Mouse).